A 674-amino-acid polypeptide reads, in one-letter code: 1,4-alpha-glucan branching enzyme GlgB 1 (674 aa).

Asp336 functions as the Nucleophile in the catalytic mechanism. Glu389 serves as the catalytic Proton donor.

Belongs to the glycosyl hydrolase 13 family. GlgB subfamily. In terms of assembly, monomer.

It catalyses the reaction Transfers a segment of a (1-&gt;4)-alpha-D-glucan chain to a primary hydroxy group in a similar glucan chain.. The protein operates within glycan biosynthesis; glycogen biosynthesis. In terms of biological role, catalyzes the formation of the alpha-1,6-glucosidic linkages in glycogen by scission of a 1,4-alpha-linked oligosaccharide from growing alpha-1,4-glucan chains and the subsequent attachment of the oligosaccharide to the alpha-1,6 position. This is 1,4-alpha-glucan branching enzyme GlgB 1 from Clostridium perfringens (strain SM101 / Type A).